The chain runs to 150 residues: Large ribosomal subunit protein eL19 (150 aa).

A disordered region spans residues 56–89; the sequence is KGQSRARARAFQEARKKGRHRGPGSKKGKKTARM. Residues 71 to 89 are compositionally biased toward basic residues; sequence KKGRHRGPGSKKGKKTARM.

This sequence belongs to the eukaryotic ribosomal protein eL19 family. Part of the 50S ribosomal subunit.

Functionally, binds to the 23S rRNA. This Thermococcus kodakarensis (strain ATCC BAA-918 / JCM 12380 / KOD1) (Pyrococcus kodakaraensis (strain KOD1)) protein is Large ribosomal subunit protein eL19.